We begin with the raw amino-acid sequence, 143 residues long: Monothiol glutaredoxin-5, mitochondrial (143 aa).

The transit peptide at 1-28 (MFGRISTRALLRPAFTHRIPSVSLSRFL) directs the protein to the mitochondrion. Residues 33–138 (KQAIESAIES…KLLEDADALV (106 aa)) enclose the Glutaredoxin domain. K50 serves as a coordination point for glutathione. A [2Fe-2S] cluster-binding site is contributed by C58. Glutathione contacts are provided by residues 90–94 (REGVK), I102, and 115–116 (CD).

It belongs to the glutaredoxin family. Monothiol subfamily. As to quaternary structure, homodimer.

The protein resides in the mitochondrion matrix. In terms of biological role, monothiol glutaredoxin involved in mitochondrial iron-sulfur (Fe/S) cluster transfer. Receives iron-sulfur clusters from scaffold protein ISU1 and mediates their transfer to apoproteins, to the 4Fe/FS cluster biosynthesis machinery, or export from mitochondrion. This chain is Monothiol glutaredoxin-5, mitochondrial (GRX5), found in Lachancea kluyveri (Yeast).